The primary structure comprises 418 residues: Tyrosine--tRNA ligase (418 aa).

Tyrosine 39 lines the L-tyrosine pocket. Positions 44 to 53 match the 'HIGH' region motif; that stretch reads CTADSLHVGS. Positions 176 and 180 each coordinate L-tyrosine. A 'KMSKS' region motif is present at residues 236–240; sequence KMGKT. Lysine 239 serves as a coordination point for ATP. The S4 RNA-binding domain maps to 350–416; the sequence is LPLAEMMRAT…KKRHALIRVL (67 aa).

The protein belongs to the class-I aminoacyl-tRNA synthetase family. TyrS type 1 subfamily. In terms of assembly, homodimer.

The protein localises to the cytoplasm. The catalysed reaction is tRNA(Tyr) + L-tyrosine + ATP = L-tyrosyl-tRNA(Tyr) + AMP + diphosphate + H(+). Functionally, catalyzes the attachment of tyrosine to tRNA(Tyr) in a two-step reaction: tyrosine is first activated by ATP to form Tyr-AMP and then transferred to the acceptor end of tRNA(Tyr). In Rhodospirillum rubrum (strain ATCC 11170 / ATH 1.1.1 / DSM 467 / LMG 4362 / NCIMB 8255 / S1), this protein is Tyrosine--tRNA ligase.